Consider the following 126-residue polypeptide: Small ribosomal subunit protein uS8 (126 aa).

The protein belongs to the universal ribosomal protein uS8 family. As to quaternary structure, part of the 30S ribosomal subunit. Contacts proteins S5 and S12.

One of the primary rRNA binding proteins, it binds directly to 16S rRNA central domain where it helps coordinate assembly of the platform of the 30S subunit. In Oleidesulfovibrio alaskensis (strain ATCC BAA-1058 / DSM 17464 / G20) (Desulfovibrio alaskensis), this protein is Small ribosomal subunit protein uS8.